A 255-amino-acid polypeptide reads, in one-letter code: Myogenic factor 5 (255 aa).

One can recognise a bHLH domain in the interval 83–134; sequence DRRKAATMRERRRLKKVNQAFETLKRCTTTNPNQRLPKVEILRNAIRYIESL. The tract at residues 226 to 249 is disordered; sequence DTASLSPATSANSQPATPGPSSSR.

Efficient DNA binding requires dimerization with another bHLH protein.

It localises to the nucleus. In terms of biological role, acts as a transcriptional activator that promotes transcription of muscle-specific target genes and plays a role in muscle differentiation. Together with MYOG and MYOD1, co-occupies muscle-specific gene promoter core region during myogenesis. Induces fibroblasts to differentiate into myoblasts. Probable sequence specific DNA-binding protein. The polypeptide is Myogenic factor 5 (Myf5) (Mus musculus (Mouse)).